Here is a 309-residue protein sequence, read N- to C-terminus: Probable lipid kinase YegS-like (309 aa).

Positions 1–134 (MAPSHWRLIL…VDLLRIDAEH (134 aa)) constitute a DAGKc domain. ATP-binding positions include Thr39, 65-71 (GDGTLSE), and Thr96. The Mg(2+) site is built by Val219, Asp222, and Leu224. Catalysis depends on Glu280, which acts as the Proton acceptor.

This sequence belongs to the diacylglycerol/lipid kinase family. YegS lipid kinase subfamily. It depends on Mg(2+) as a cofactor. Ca(2+) serves as cofactor.

The protein localises to the cytoplasm. Probably phosphorylates lipids; the in vivo substrate is unknown. The sequence is that of Probable lipid kinase YegS-like from Xanthomonas oryzae pv. oryzae (strain MAFF 311018).